Consider the following 97-residue polypeptide: MGSRFFLALFLVILMLGNEVQGNQEDDSGSLALLGTVQGSLLSYWTSAKEVAKDLYQKTYPISMDEKLRDMYSKSSAAMSTYAGIFTDQLLTLLRGE.

A signal peptide spans 1-22 (MGSRFFLALFLVILMLGNEVQG). Residues 63 to 71 (SMDEKLRDM) are lipid binding. Residues 75–97 (SSAAMSTYAGIFTDQLLTLLRGE) are lipoprotein lipase cofactor.

Belongs to the apolipoprotein C2 family. As to expression, adult and fetal liver, intestine and peritoneal macrophages.

The protein localises to the secreted. In terms of biological role, component of chylomicrons, very low-density lipoproteins (VLDL), low-density lipoproteins (LDL), and high-density lipoproteins (HDL) in plasma. Plays an important role in lipoprotein metabolism as an activator of lipoprotein lipase. The polypeptide is Apolipoprotein C-II (Apoc2) (Mus musculus (Mouse)).